Here is a 136-residue protein sequence, read N- to C-terminus: Large ribosomal subunit protein bL17 (136 aa).

Belongs to the bacterial ribosomal protein bL17 family. Part of the 50S ribosomal subunit. Contacts protein L32.

The protein is Large ribosomal subunit protein bL17 of Rickettsia conorii (strain ATCC VR-613 / Malish 7).